Consider the following 350-residue polypeptide: tRNA pseudouridine synthase D (350 aa).

The Nucleophile role is filled by Asp79. Residues 154-306 form the TRUD domain; that stretch reads GAPNYYGPQR…EQERRPIVLY (153 aa).

It belongs to the pseudouridine synthase TruD family.

It carries out the reaction uridine(13) in tRNA = pseudouridine(13) in tRNA. Its function is as follows. Responsible for synthesis of pseudouridine from uracil-13 in transfer RNAs. This chain is tRNA pseudouridine synthase D, found in Pseudoalteromonas atlantica (strain T6c / ATCC BAA-1087).